The following is a 136-amino-acid chain: Diuretic hormone 41 (136 aa).

Positions 1–26 (MMWWAVWCAAMVAGSVFTAAAPPTDS) are cleaved as a signal peptide. The propeptide occupies 27–76 (IDLMQMDPSLADDESLGFAMQSLSGRYAAAPWLYLLADVSHDPQNGSDRV). Ile119 is modified (isoleucine amide). Residues 123-136 (GFHWAPSAKAAKFY) constitute a propeptide that is removed on maturation.

The protein belongs to the sauvagine/corticotropin-releasing factor/urotensin I family.

It localises to the secreted. Functionally, regulation of fluid secretion. This is Diuretic hormone 41 (dh41) from Bombyx mori (Silk moth).